Consider the following 192-residue polypeptide: I-Kappa-B like protein H1 (192 aa).

3 ANK repeats span residues 94–126, 131–161, and 165–192; these read KGAQ…DING, AGLT…DVKV, and GKET…SKKM.

The protein belongs to the polydnaviridae I-Kappa-B-like protein family.

Its function is as follows. Suppresses the host immune response through NF-kappa-B inactivation. Possesses ankyrin repeat domains required for NF-kappa-B binding but lacks the regulatory regions required for dissociation from NF-kappa-B and degradation. Therefore, prevents host NF-kappa-B release and subsequent activation. The chain is I-Kappa-B like protein H1 (H4) from Microplitis demolitor bracovirus (isolate Webb) (MdBV).